We begin with the raw amino-acid sequence, 334 residues long: DNA-directed RNA polymerase subunit alpha (334 aa).

The tract at residues 1–234 (MQRSLNEFLT…QQLAVFVDFD (234 aa)) is alpha N-terminal domain (alpha-NTD). The interval 248 to 334 (IDPILLRPVD…IRGDDRVLGG (87 aa)) is alpha C-terminal domain (alpha-CTD).

It belongs to the RNA polymerase alpha chain family. In terms of assembly, homodimer. The RNAP catalytic core consists of 2 alpha, 1 beta, 1 beta' and 1 omega subunit. When a sigma factor is associated with the core the holoenzyme is formed, which can initiate transcription.

It carries out the reaction RNA(n) + a ribonucleoside 5'-triphosphate = RNA(n+1) + diphosphate. Functionally, DNA-dependent RNA polymerase catalyzes the transcription of DNA into RNA using the four ribonucleoside triphosphates as substrates. In Hahella chejuensis (strain KCTC 2396), this protein is DNA-directed RNA polymerase subunit alpha.